A 185-amino-acid polypeptide reads, in one-letter code: Ribosome-recycling factor (185 aa).

This sequence belongs to the RRF family.

It is found in the cytoplasm. Its function is as follows. Responsible for the release of ribosomes from messenger RNA at the termination of protein biosynthesis. May increase the efficiency of translation by recycling ribosomes from one round of translation to another. In Roseiflexus sp. (strain RS-1), this protein is Ribosome-recycling factor.